We begin with the raw amino-acid sequence, 105 residues long: Heat shock protein HspQ (105 aa).

This sequence belongs to the HspQ family.

It localises to the cytoplasm. Functionally, involved in the degradation of certain denaturated proteins, including DnaA, during heat shock stress. This is Heat shock protein HspQ from Escherichia fergusonii (strain ATCC 35469 / DSM 13698 / CCUG 18766 / IAM 14443 / JCM 21226 / LMG 7866 / NBRC 102419 / NCTC 12128 / CDC 0568-73).